Here is a 240-residue protein sequence, read N- to C-terminus: MRQLSTTALVLFLFFYCSISTAWSLPYFAYRKRIPEPLLNKPRSRHARSIEDLDGLKEWLSNQQPLRGAVMAPPSEDNKRTVTVKGGANNEPTISDVLPKTRGINIYASLTRQFETVERRLKDQTQNVTVLAPRNSAIQDLPHKPWENPDDYEKFGEMNAYEGDKGQDRAKRNLERFVSAHVVAQSPWREGEEAETLGGDKLTWRKDGDRIYIEPERIRVESIAEQVSNGEVWVIDGVIN.

The N-terminal stretch at 1 to 24 (MRQLSTTALVLFLFFYCSISTAWS) is a signal peptide. Residues 91 to 239 (EPTISDVLPK…GEVWVIDGVI (149 aa)) enclose the FAS1 domain.

The protein resides in the vacuole. The chain is FAS1 domain-containing protein AN1527 from Emericella nidulans (strain FGSC A4 / ATCC 38163 / CBS 112.46 / NRRL 194 / M139) (Aspergillus nidulans).